We begin with the raw amino-acid sequence, 1359 residues long: ABC transporter C family member 1 (1359 aa).

Residues 111-394 (NKLTIFLQIL…LPNSIQQLQS (284 aa)) form the ABC transmembrane type-1 1 domain. 6 helical membrane-spanning segments follow: residues 119–139 (ILTN…IQFI), 147–167 (SFLA…SYTF), 214–234 (LLSV…MGIF), 244–264 (LALL…IMVI), 332–352 (MIFW…VLVL), and 363–383 (ITLE…IPLL). A disordered region spans residues 409–478 (PEIQQNHSSN…QQQQQQQQQQ (70 aa)). Positions 420–433 (EEEEEDEYDDDINS) are enriched in acidic residues. Residues 440 to 450 (HNGSFNWNQVD) are compositionally biased toward polar residues. Positions 459-478 (GNQQQQQQQQQQQQQQQQQQ) are enriched in low complexity. In terms of domain architecture, ABC transporter 1 spans 470–690 (QQQQQQQQQQ…IDFESIMKTK (221 aa)). Residue 502-509 (GVVGSGKT) participates in ATP binding. Residues 763-1061 (LRVYKEYFKH…LEVKMNSVER (299 aa)) enclose the ABC transmembrane type-1 2 domain. 5 consecutive transmembrane segments (helical) span residues 773-793 (GSSI…QIIY), 819-839 (IYLL…FMMA), 884-904 (VDLL…TVLV), 906-926 (IGIM…LIGI), and 999-1021 (WVAV…FSLF). A coiled-coil region spans residues 1073–1102 (NSKINFFRNEQQEEEEEEEEEFDFDNDDYD). An ABC transporter 2 domain is found at 1116–1350 (IEFRNVEIKY…QESRFSKLVK (235 aa)). Residue 1150–1157 (GRTGAGKS) participates in ATP binding.

It belongs to the ABC transporter superfamily. ABCC family. Conjugate transporter (TC 3.A.1.208) subfamily.

It is found in the membrane. This Dictyostelium discoideum (Social amoeba) protein is ABC transporter C family member 1 (abcC1).